Reading from the N-terminus, the 721-residue chain is MQGQTQSISFDGREIRLTTGRFAPQAGGSVLVECGDTAVLVTATRSGGREGIDFLPLICDYEERLYAAGRIPGSYQRREGRPPERATLTARLIDRPMRPLFPAWLRDDLQVVATCLSLDERVPADVLAVTGASIATLLAGIPFNGPMAAVRVGLLGDDFVLNPSYREIERGDLDLIVAGTPDGVVMVEAGGNQLPEQDVIEAIDFGYEAICELIKAQEQLLKDLGIEQVKPETPTQDTTVPAYLEKQCTKAISEVLKKFDQTKDERDKALDAIKAEAAEAIAGLKEDDAIRVATASNSKLLGNSFKALTKTLMRQQILKDGKRVDGRALDEVRAISALAGVLPRRVHGSGLFQRGLTQVLSTATLGTPSDAQEMDDLHPSTEKLYLHHYNFPPYSVGETRPMRSPGRREIGHGALAERAILPVLPAKDTFPYVVRVVSEVLSSNGSTSMGSVCGSTLSLMDAGVPLKAPVSGAAMGLIKEGDDIRILTDIQGIEDFLGDMDFKVAGSEKGITALQMDMKITGLPVKTIAEAINQARPARLHILEKMLEAIDTPREGLSPHAPRLLSFRIDPELIGTVIGPGGRTIKGITERTNTKIDIEDSGIVTIASHDGAAADEAQKIIEGLTRKVNEGEVFSGSITRIIPIGAFVEILPGKEGMIHISQLSEARVEKVEDVVKVGDEVTVRVREIDNRGRINLTLRGVPQSGDGAGEEPQPTPVAPLS.

Mg(2+) contacts are provided by D495 and D501. A KH domain is found at 562–621 (PRLLSFRIDPELIGTVIGPGGRTIKGITERTNTKIDIEDSGIVTIASHDGAAADEAQKII). In terms of domain architecture, S1 motif spans 631–699 (GEVFSGSITR…NRGRINLTLR (69 aa)). Positions 698–721 (LRGVPQSGDGAGEEPQPTPVAPLS) are disordered.

The protein belongs to the polyribonucleotide nucleotidyltransferase family. Mg(2+) serves as cofactor.

It is found in the cytoplasm. It carries out the reaction RNA(n+1) + phosphate = RNA(n) + a ribonucleoside 5'-diphosphate. In terms of biological role, involved in mRNA degradation. Catalyzes the phosphorolysis of single-stranded polyribonucleotides processively in the 3'- to 5'-direction. This Parasynechococcus marenigrum (strain WH8102) protein is Polyribonucleotide nucleotidyltransferase.